A 404-amino-acid polypeptide reads, in one-letter code: Glucose-1-phosphate adenylyltransferase 2 (404 aa).

Alpha-D-glucose 1-phosphate is bound by residues Y97, G162, 177-178 (EK), and S195.

It belongs to the bacterial/plant glucose-1-phosphate adenylyltransferase family. Homotetramer.

It carries out the reaction alpha-D-glucose 1-phosphate + ATP + H(+) = ADP-alpha-D-glucose + diphosphate. It functions in the pathway glycan biosynthesis; glycogen biosynthesis. In terms of biological role, involved in the biosynthesis of ADP-glucose, a building block required for the elongation reactions to produce glycogen. Catalyzes the reaction between ATP and alpha-D-glucose 1-phosphate (G1P) to produce pyrophosphate and ADP-Glc. The sequence is that of Glucose-1-phosphate adenylyltransferase 2 from Vibrio vulnificus (strain CMCP6).